The chain runs to 2138 residues: Non-reducing polyketide synthase rads2 (2138 aa).

Residues 11 to 249 (LIFGDQTDSW…NPLNIHALQH (239 aa)) form an N-terminal acylcarrier protein transacylase (SAT) domain region. The Ketosynthase family 3 (KS3) domain occupies 373–804 (SGRIAIVGMA…GGNACMLLED (432 aa)). Catalysis depends on for beta-ketoacyl synthase activity residues C549, H684, and H724. Positions 901 to 1184 (VFVFGGQGSH…KGVCTSFVRA (284 aa)) are malonyl-CoA:ACP transacylase (MAT) domain. S992 (for acyl/malonyl transferase activity) is an active-site residue. The interval 1291-1437 (AQYVVQESPS…KDVQRLQADW (147 aa)) is N-terminal hotdog fold. Positions 1291–1610 (AQYVVQESPS…FHEISNATLK (320 aa)) constitute a PKS/mFAS DH domain. A product template (PT) domain region spans residues 1303–1607 (KKIQVTFRAS…GLEFHEISNA (305 aa)). The segment at 1459-1610 (HGHRFQPDIF…FHEISNATLK (152 aa)) is C-terminal hotdog fold. The disordered stretch occupies residues 1618 to 1666 (SKSVLKPDNAAPLKAPEKKEDATPTAPKKSADPGKEEEEEGDTATPAAV). The Carrier domain occupies 1666–1740 (VGEFEVIIQT…DLRRAFAMAP (75 aa)). An O-(pantetheine 4'-phosphoryl)serine modification is found at S1700. The segment covering 1740–1771 (PSSSSSTSASESVSESLDDSSSTSRSATPSSS) has biased composition (low complexity). Disordered regions lie at residues 1740 to 1781 (PSSS…GFVE) and 1807 to 1828 (QATK…SSPA). Residues 1860–2006 (ADGTGSIATY…TRRHLGAMFS (147 aa)) are thioesterase (TE) domain.

It functions in the pathway secondary metabolite biosynthesis. Its function is as follows. Non-reducing polyketide synthase; part of the gene cluster that mediates the biosynthesis of radicicol, a resorcylic acid lactone (RAL) that irreversibly inhibits the HSP90 molecular chaperone, an important target for cancer chemotherapy. The cluster encodes only two apparent post-PKS enzymes, a cytochrome P450 monooxygenase (radP) and a non-heme halogenase (radH) that introduce the epoxide and the chlorine, respectively. If this cluster includes all the genes required for radicicol biosynthesis, the remaining structural features of radicicol are presumably generated by the PKSs rads1 and rads2. The C-2' ketone could arise if the R-PKS rads1 and NR-PKS rads2 each carry out four iterations, in contrast to the five iteration-three iteration split for the hypothemycin PKSs. The origin of the cis 5',6' double bond is not known. The radicicol R-PKS rads1 ER domain may catalyze either double bond isomerization or reduction in the third iteration. The protein is Non-reducing polyketide synthase rads2 of Floropilus chiversii (Chaetomium chiversii).